A 291-amino-acid polypeptide reads, in one-letter code: MDYLVKALAYDGKVRAYAANTTDTINEAQRRHHTWPTASAAIGRTMTATVMMGAMLKGENKLTVKIEGGGPIGAIIADGNAKGQVRGYVSNPQVHFDLNEHGKLDVRRAVGTSGTLSVVKDIGLKDHFTGQTEIVSGEIGDDFTYYLVSSEQVPSSVGVGVLVNPDNSILAAGGFIIQLLPGTEDAVIERLEKRLSTIEPISKLIEKGMTPEEILEEVLGEKPQILETVPVEFSCNCSKERFANGIISLGKAEIDDMIEQDGQAEAQCHFCNETYVFTKEELEELREEITR.

Cystine bridges form between cysteine 235/cysteine 237 and cysteine 268/cysteine 271.

It belongs to the HSP33 family. In terms of processing, under oxidizing conditions two disulfide bonds are formed involving the reactive cysteines. Under reducing conditions zinc is bound to the reactive cysteines and the protein is inactive.

It is found in the cytoplasm. Functionally, redox regulated molecular chaperone. Protects both thermally unfolding and oxidatively damaged proteins from irreversible aggregation. Plays an important role in the bacterial defense system toward oxidative stress. The sequence is that of 33 kDa chaperonin from Bacillus pumilus (strain SAFR-032).